The chain runs to 354 residues: Serum paraoxonase/arylesterase 2 (354 aa).

N-linked (GlcNAc...) asparagine glycosylation is present at Asn-29. A disulfide bond links Cys-42 and Cys-352. The Ca(2+) site is built by Glu-53 and Asp-54. His-114 acts as the Proton acceptor in catalysis. Positions 116, 167, 168, and 223 each coordinate Ca(2+). Residue Asn-254 is glycosylated (N-linked (GlcNAc...) asparagine). Ca(2+) is bound by residues Asp-268 and Asn-269. N-linked (GlcNAc...) asparagine glycosylation is found at Asn-269 and Asn-323.

Belongs to the paraoxonase family. Ca(2+) serves as cofactor. In terms of processing, glycosylated. The signal sequence is not cleaved.

The protein resides in the membrane. It catalyses the reaction a phenyl acetate + H2O = a phenol + acetate + H(+). The enzyme catalyses An aryl dialkyl phosphate + H2O = dialkyl phosphate + an aryl alcohol.. Its function is as follows. The absence of paraoxonase activity in turkey and chicken blood and in turkey liver indicates that PON2, if expressed, does not hydrolyze paraoxon. This chain is Serum paraoxonase/arylesterase 2 (PON2), found in Gallus gallus (Chicken).